Reading from the N-terminus, the 325-residue chain is Biotin synthase (325 aa).

In terms of domain architecture, Radical SAM core spans 52–281 (YQKDDVVLCS…AKPLLICGGR (230 aa)). Residues Cys70, Cys74, and Cys77 each coordinate [4Fe-4S] cluster. Positions 114, 146, and 206 each coordinate [2Fe-2S] cluster.

The protein belongs to the radical SAM superfamily. Biotin synthase family. In terms of assembly, homodimer. [4Fe-4S] cluster is required as a cofactor. [2Fe-2S] cluster serves as cofactor.

The enzyme catalyses (4R,5S)-dethiobiotin + (sulfur carrier)-SH + 2 reduced [2Fe-2S]-[ferredoxin] + 2 S-adenosyl-L-methionine = (sulfur carrier)-H + biotin + 2 5'-deoxyadenosine + 2 L-methionine + 2 oxidized [2Fe-2S]-[ferredoxin]. The protein operates within cofactor biosynthesis; biotin biosynthesis; biotin from 7,8-diaminononanoate: step 2/2. Functionally, catalyzes the conversion of dethiobiotin (DTB) to biotin by the insertion of a sulfur atom into dethiobiotin via a radical-based mechanism. The sequence is that of Biotin synthase from Syntrophus aciditrophicus (strain SB).